The following is a 497-amino-acid chain: Aluminum-activated malate transporter 10 (497 aa).

Helical transmembrane passes span 66-86, 88-108, 123-143, 148-168, 173-193, and 210-230; these read KVVHCLKVGLALSLVSIFYYM, PLYDGVGGNAMWAIMTVVVVF, VVATILAGSLGIAVHWVATQS, VFVIGCSVFLFAFAATYSRFV, ARFDYGAMIFILTFSLVSVGG, and IAIGTSICIIITVFFCPIWAG. 2 disordered regions span residues 413 to 437 and 476 to 497; these read PIETNKPEEVPSEEENKVDSEERTT and DFEQDSKKKTGDNNTKQPPLSS. The span at 417 to 436 shows a compositional bias: basic and acidic residues; it reads NKPEEVPSEEENKVDSEERT. Positions 487 to 497 are enriched in polar residues; that stretch reads DNNTKQPPLSS.

The protein belongs to the aromatic acid exporter (TC 2.A.85) family.

The protein resides in the membrane. Functionally, malate transporter. In Arabidopsis thaliana (Mouse-ear cress), this protein is Aluminum-activated malate transporter 10 (ALMT10).